Reading from the N-terminus, the 103-residue chain is Cell division protein FtsB (103 aa).

The Cytoplasmic portion of the chain corresponds to 1 to 3 (MGK). A helical transmembrane segment spans residues 4–21 (LTLLLLALLVWLQYSLWF). The Periplasmic segment spans residues 22-103 (GKNGIHDYSR…RAGGPAQNNR (82 aa)). Positions 38-62 (VQQATNAKLKARNDQLFAEIDDLNG) form a coiled coil.

Belongs to the FtsB family. In terms of assembly, part of a complex composed of FtsB, FtsL and FtsQ.

It localises to the cell inner membrane. Essential cell division protein. May link together the upstream cell division proteins, which are predominantly cytoplasmic, with the downstream cell division proteins, which are predominantly periplasmic. This is Cell division protein FtsB from Cronobacter sakazakii (strain ATCC BAA-894) (Enterobacter sakazakii).